The following is a 169-amino-acid chain: Peptide deformylase 1 (169 aa).

Fe cation is bound by residues C93 and H135. E136 is an active-site residue. H139 lines the Fe cation pocket.

The protein belongs to the polypeptide deformylase family. Requires Fe(2+) as cofactor.

It carries out the reaction N-terminal N-formyl-L-methionyl-[peptide] + H2O = N-terminal L-methionyl-[peptide] + formate. Removes the formyl group from the N-terminal Met of newly synthesized proteins. Requires at least a dipeptide for an efficient rate of reaction. N-terminal L-methionine is a prerequisite for activity but the enzyme has broad specificity at other positions. This is Peptide deformylase 1 from Corynebacterium efficiens (strain DSM 44549 / YS-314 / AJ 12310 / JCM 11189 / NBRC 100395).